The primary structure comprises 493 residues: Glutamate--tRNA ligase (493 aa).

Positions 10–20 match the 'HIGH' region motif; the sequence is PSPTGDPHVGT. The short motif at 251 to 255 is the 'KMSKS' region element; the sequence is KLSKR. Lys-254 is an ATP binding site.

It belongs to the class-I aminoacyl-tRNA synthetase family. Glutamate--tRNA ligase type 1 subfamily. Monomer.

It is found in the cytoplasm. The catalysed reaction is tRNA(Glu) + L-glutamate + ATP = L-glutamyl-tRNA(Glu) + AMP + diphosphate. Functionally, catalyzes the attachment of glutamate to tRNA(Glu) in a two-step reaction: glutamate is first activated by ATP to form Glu-AMP and then transferred to the acceptor end of tRNA(Glu). This is Glutamate--tRNA ligase from Pseudomonas savastanoi pv. phaseolicola (strain 1448A / Race 6) (Pseudomonas syringae pv. phaseolicola (strain 1448A / Race 6)).